Here is a 155-residue protein sequence, read N- to C-terminus: Transcription antitermination protein NusB (155 aa).

It belongs to the NusB family.

In terms of biological role, involved in transcription antitermination. Required for transcription of ribosomal RNA (rRNA) genes. Binds specifically to the boxA antiterminator sequence of the ribosomal RNA (rrn) operons. The chain is Transcription antitermination protein NusB from Aliivibrio fischeri (strain ATCC 700601 / ES114) (Vibrio fischeri).